A 680-amino-acid polypeptide reads, in one-letter code: DNA-directed RNA polymerase subunit beta' (680 aa).

Residues Cys69, Cys71, Cys87, and Cys90 each contribute to the Zn(2+) site. The Mg(2+) site is built by Asp489, Asp491, and Asp493.

It belongs to the RNA polymerase beta' chain family. RpoC1 subfamily. In plastids the minimal PEP RNA polymerase catalytic core is composed of four subunits: alpha, beta, beta', and beta''. When a (nuclear-encoded) sigma factor is associated with the core the holoenzyme is formed, which can initiate transcription. Mg(2+) is required as a cofactor. The cofactor is Zn(2+).

The protein resides in the plastid. The protein localises to the chloroplast. It carries out the reaction RNA(n) + a ribonucleoside 5'-triphosphate = RNA(n+1) + diphosphate. DNA-dependent RNA polymerase catalyzes the transcription of DNA into RNA using the four ribonucleoside triphosphates as substrates. The polypeptide is DNA-directed RNA polymerase subunit beta' (Arabis hirsuta (Hairy rock-cress)).